Consider the following 130-residue polypeptide: Small ribosomal subunit protein uS8 (130 aa).

The protein belongs to the universal ribosomal protein uS8 family. As to quaternary structure, part of the 30S ribosomal subunit. Contacts proteins S5 and S12.

One of the primary rRNA binding proteins, it binds directly to 16S rRNA central domain where it helps coordinate assembly of the platform of the 30S subunit. The chain is Small ribosomal subunit protein uS8 from Vibrio campbellii (strain ATCC BAA-1116).